We begin with the raw amino-acid sequence, 917 residues long: Gamma-tubulin complex component 3 (917 aa).

It belongs to the TUBGCP family. As to quaternary structure, gamma-tubulin small complex (Gamma TuSC) is a heterotetrameric complex which contains two molecules of gamma-tubulin, and one molecule each of Dgrip84 and Dgrip91. The gamma-tubulin in this complex binds preferentially to GDP over GTP.

It localises to the cytoplasm. It is found in the cytoskeleton. The protein resides in the microtubule organizing center. Its subcellular location is the centrosome. The protein localises to the perinuclear region. This Drosophila melanogaster (Fruit fly) protein is Gamma-tubulin complex component 3.